The chain runs to 219 residues: Probable nicotinate-nucleotide adenylyltransferase (219 aa).

This sequence belongs to the NadD family.

The enzyme catalyses nicotinate beta-D-ribonucleotide + ATP + H(+) = deamido-NAD(+) + diphosphate. The protein operates within cofactor biosynthesis; NAD(+) biosynthesis; deamido-NAD(+) from nicotinate D-ribonucleotide: step 1/1. In terms of biological role, catalyzes the reversible adenylation of nicotinate mononucleotide (NaMN) to nicotinic acid adenine dinucleotide (NaAD). In Hahella chejuensis (strain KCTC 2396), this protein is Probable nicotinate-nucleotide adenylyltransferase.